A 37-amino-acid polypeptide reads, in one-letter code: Non-specific lipid-transfer protein (37 aa).

The protein belongs to the plant LTP family.

Plant non-specific lipid-transfer proteins transfer phospholipids as well as galactolipids across membranes. May play a role in wax or cutin deposition in the cell walls of expanding epidermal cells and certain secretory tissues. The chain is Non-specific lipid-transfer protein from Artemisia vulgaris (Mugwort).